A 182-amino-acid polypeptide reads, in one-letter code: Isopentenyl-diphosphate Delta-isomerase (182 aa).

Residues His-25 and His-32 each contribute to the Mn(2+) site. The 135-residue stretch at Leu-30–Met-164 folds into the Nudix hydrolase domain. Cys-67 is a catalytic residue. His-69 serves as a coordination point for Mn(2+). Glu-87 serves as a coordination point for Mg(2+). Positions 114 and 116 each coordinate Mn(2+). Glu-116 is an active-site residue.

The protein belongs to the IPP isomerase type 1 family. Homodimer. Mg(2+) is required as a cofactor. The cofactor is Mn(2+).

Its subcellular location is the cytoplasm. The catalysed reaction is isopentenyl diphosphate = dimethylallyl diphosphate. It functions in the pathway isoprenoid biosynthesis; dimethylallyl diphosphate biosynthesis; dimethylallyl diphosphate from isopentenyl diphosphate: step 1/1. Functionally, catalyzes the 1,3-allylic rearrangement of the homoallylic substrate isopentenyl (IPP) to its highly electrophilic allylic isomer, dimethylallyl diphosphate (DMAPP). This Escherichia coli O17:K52:H18 (strain UMN026 / ExPEC) protein is Isopentenyl-diphosphate Delta-isomerase.